A 175-amino-acid polypeptide reads, in one-letter code: ATP synthase subunit b (175 aa).

A helical membrane pass occupies residues 18-38 (VTSWEPFVANLIAFILMVVIL).

It belongs to the ATPase B chain family. As to quaternary structure, F-type ATPases have 2 components, F(1) - the catalytic core - and F(0) - the membrane proton channel. F(1) has five subunits: alpha(3), beta(3), gamma(1), delta(1), epsilon(1). F(0) has three main subunits: a(1), b(2) and c(10-14). The alpha and beta chains form an alternating ring which encloses part of the gamma chain. F(1) is attached to F(0) by a central stalk formed by the gamma and epsilon chains, while a peripheral stalk is formed by the delta and b chains.

The protein resides in the cell inner membrane. F(1)F(0) ATP synthase produces ATP from ADP in the presence of a proton or sodium gradient. F-type ATPases consist of two structural domains, F(1) containing the extramembraneous catalytic core and F(0) containing the membrane proton channel, linked together by a central stalk and a peripheral stalk. During catalysis, ATP synthesis in the catalytic domain of F(1) is coupled via a rotary mechanism of the central stalk subunits to proton translocation. Its function is as follows. Component of the F(0) channel, it forms part of the peripheral stalk, linking F(1) to F(0). This Akkermansia muciniphila (strain ATCC BAA-835 / DSM 22959 / JCM 33894 / BCRC 81048 / CCUG 64013 / CIP 107961 / Muc) protein is ATP synthase subunit b.